Consider the following 89-residue polypeptide: Large ribosomal subunit protein bL27 (89 aa).

The segment at 1 to 24 is disordered; the sequence is MAHKKGTGSTRNGRDSNAKRLGVK.

This sequence belongs to the bacterial ribosomal protein bL27 family.

The chain is Large ribosomal subunit protein bL27 from Synechococcus sp. (strain JA-2-3B'a(2-13)) (Cyanobacteria bacterium Yellowstone B-Prime).